Reading from the N-terminus, the 287-residue chain is ATP synthase gamma chain (287 aa).

This sequence belongs to the ATPase gamma chain family. As to quaternary structure, F-type ATPases have 2 components, CF(1) - the catalytic core - and CF(0) - the membrane proton channel. CF(1) has five subunits: alpha(3), beta(3), gamma(1), delta(1), epsilon(1). CF(0) has three main subunits: a, b and c.

The protein resides in the cell inner membrane. Functionally, produces ATP from ADP in the presence of a proton gradient across the membrane. The gamma chain is believed to be important in regulating ATPase activity and the flow of protons through the CF(0) complex. The chain is ATP synthase gamma chain from Shigella boydii serotype 4 (strain Sb227).